We begin with the raw amino-acid sequence, 176 residues long: Ubiquinol-cytochrome c reductase iron-sulfur subunit (176 aa).

Residues 15–36 traverse the membrane as a helical segment; sequence FLFVATGAAAAVGGAAALWPFI. One can recognise a Rieske domain in the interval 87–174; it reads ARAVNVASLP…YQFVSDTKIQ (88 aa). The [2Fe-2S] cluster site is built by cysteine 119, histidine 121, cysteine 138, and histidine 141. A disulfide bridge links cysteine 124 with cysteine 140.

The protein belongs to the Rieske iron-sulfur protein family. In terms of assembly, the main subunits of complex b-c1 are: cytochrome b, cytochrome c1 and the Rieske protein. Requires [2Fe-2S] cluster as cofactor.

Its subcellular location is the cell membrane. The enzyme catalyses a quinol + 2 Fe(III)-[cytochrome c](out) = a quinone + 2 Fe(II)-[cytochrome c](out) + 2 H(+)(out). In terms of biological role, component of the ubiquinol-cytochrome c reductase complex (complex III or cytochrome b-c1 complex), which is a respiratory chain that generates an electrochemical potential coupled to ATP synthesis. In Bradyrhizobium diazoefficiens (strain JCM 10833 / BCRC 13528 / IAM 13628 / NBRC 14792 / USDA 110), this protein is Ubiquinol-cytochrome c reductase iron-sulfur subunit (petA).